We begin with the raw amino-acid sequence, 639 residues long: E3 ubiquitin-protein ligase HEL2 (639 aa).

The segment at 1 to 55 (MSESVKENVTPTRNFRRTQGPQNNTKPHNDRKNFRRKQKKNNLSAEPNLTTSSAD) is disordered. At Ser2 the chain carries N-acetylserine. Composition is skewed to polar residues over residues 7-26 (ENVT…NNTK) and 43-54 (LSAEPNLTTSSA). Phosphothreonine is present on Thr57. An RING-type zinc finger spans residues 64-104 (CVICARKLTYVSLTPCHHKTCHICGFRQRALYNKKSCLICR). The region spanning 222-292 (PMCAFCSGKR…QTCLDNKFVV (71 aa)) is the LIM zinc-binding domain. Positions 343 to 354 (SISSLPGSSSGS) are enriched in low complexity. Disordered regions lie at residues 343-367 (SISS…PEES) and 550-631 (LESK…GKQK). Ser354 is modified (phosphoserine).

It belongs to the ZNF598/HEL2 family. Interacts with the E2 ubiquitin-conjugating enzyme UBC4. Interacts with histones H3 and H4.

The protein localises to the cytoplasm. The enzyme catalyses S-ubiquitinyl-[E2 ubiquitin-conjugating enzyme]-L-cysteine + [acceptor protein]-L-lysine = [E2 ubiquitin-conjugating enzyme]-L-cysteine + N(6)-ubiquitinyl-[acceptor protein]-L-lysine.. The protein operates within protein modification; protein ubiquitination. Functionally, E3 ubiquitin-protein ligase that plays a key role in the ribosome quality control (RQC), a pathway that takes place when a ribosome has stalled during translation, leading to degradation of nascent peptide chains. HEL2 is activated when ribosomes are stalled within an mRNA following translation of prematurely polyadenylated mRNAs. Acts as a ribosome collision sensor: specifically recognizes and binds collided ribosome and ubiquitinates the 40S ribosomal proteins RPS20/uS10 and RPS3/uS3. Catalyzes 'Lys-63'-linked polyubiquitination of RPS20/uS10, promoting recruitment of the RQT (ribosome quality control trigger) complex, which drives the disassembly of stalled ribosomes, followed by degradation of nascent peptides. HEL2 also acts as an activator of the No-Go decay (NGD) pathway by mediating polyubiquitination of monoubiquitinated RPS3/uS3 and RPS7/es7: RPS3/uS3 and RPS7/es7 are first monoubiquitinated by MAG2 and MOT2/NOT4, respectively, and HEL2 mediates formation of 'Lys-63'-linked polyubiquitin chains on monoubiquitin, leading to activation of the NGD pathway in a CUE2-mediated endonucleolytic cleavage. Polyubiquitination of RPS3/uS3 also triggers degradation of non-functional 18S rRNA. The RQC pathway and the integrated stress response (ISR) antagonize each other: HEL2 prevents the activation of GCN2, while GCN2 suppresses RQC activation. The RQC pathway functions as a preventive quality control in the secretory pathway: HEL2 binds preferentially to the pre-engaged secretory ribosome-nascent chain complexes and prevents mistargeting of secretory proteins into mitochondria. Independently of its role in RQC, also involved in the polyubiquitination and proteasomal-degradation of excess histone proteins. This chain is E3 ubiquitin-protein ligase HEL2, found in Saccharomyces cerevisiae (strain ATCC 204508 / S288c) (Baker's yeast).